Here is a 239-residue protein sequence, read N- to C-terminus: MKSGTLKTKGFKFKQFSIASSNSGMPVSTDGVLLGAWADFHHCQNLLDIGTGTGLLSLMCAQRYVHLSITAVDIDAHAMEAAQENFSHSPWHSRLQLQHGDVLKLNFTHRFDGIICNPPYFNSGEQAQATQRATARHTDTLAHDALLLRCRELLTPNGKANFVLPLTEGEQFLQLAQQQGWHLHRLCRVKPSPNKPVHRLLFELGLSTATTSEEHLTINDGSTYSAAFVKLCQDFYLKM.

This sequence belongs to the methyltransferase superfamily. tRNA (adenine-N(6)-)-methyltransferase family.

It is found in the cytoplasm. The catalysed reaction is adenosine(37) in tRNA1(Val) + S-adenosyl-L-methionine = N(6)-methyladenosine(37) in tRNA1(Val) + S-adenosyl-L-homocysteine + H(+). Specifically methylates the adenine in position 37 of tRNA(1)(Val) (anticodon cmo5UAC). The protein is tRNA1(Val) (adenine(37)-N6)-methyltransferase of Vibrio vulnificus (strain CMCP6).